The primary structure comprises 125 residues: Large ribosomal subunit protein uL18 (125 aa).

Belongs to the universal ribosomal protein uL18 family. As to quaternary structure, part of the 50S ribosomal subunit; part of the 5S rRNA/L5/L18/L25 subcomplex. Contacts the 5S and 23S rRNAs.

Its function is as follows. This is one of the proteins that bind and probably mediate the attachment of the 5S RNA into the large ribosomal subunit, where it forms part of the central protuberance. The polypeptide is Large ribosomal subunit protein uL18 (Anaplasma marginale (strain Florida)).